We begin with the raw amino-acid sequence, 251 residues long: Ubiquinone/menaquinone biosynthesis C-methyltransferase UbiE (251 aa).

S-adenosyl-L-methionine is bound by residues Thr-74, Asp-95, 123–124 (NA), and Ser-140.

Belongs to the class I-like SAM-binding methyltransferase superfamily. MenG/UbiE family.

The enzyme catalyses a 2-demethylmenaquinol + S-adenosyl-L-methionine = a menaquinol + S-adenosyl-L-homocysteine + H(+). The catalysed reaction is a 2-methoxy-6-(all-trans-polyprenyl)benzene-1,4-diol + S-adenosyl-L-methionine = a 5-methoxy-2-methyl-3-(all-trans-polyprenyl)benzene-1,4-diol + S-adenosyl-L-homocysteine + H(+). It functions in the pathway quinol/quinone metabolism; menaquinone biosynthesis; menaquinol from 1,4-dihydroxy-2-naphthoate: step 2/2. Its pathway is cofactor biosynthesis; ubiquinone biosynthesis. In terms of biological role, methyltransferase required for the conversion of demethylmenaquinol (DMKH2) to menaquinol (MKH2) and the conversion of 2-polyprenyl-6-methoxy-1,4-benzoquinol (DDMQH2) to 2-polyprenyl-3-methyl-6-methoxy-1,4-benzoquinol (DMQH2). The protein is Ubiquinone/menaquinone biosynthesis C-methyltransferase UbiE of Pectobacterium carotovorum subsp. carotovorum (strain PC1).